A 70-amino-acid chain; its full sequence is ATP synthase subunit c (70 aa).

2 helical membrane-spanning segments follow: residues 4–24 (IAAA…NGLI) and 45–65 (IMFI…VIAF).

The protein belongs to the ATPase C chain family. F-type ATPases have 2 components, F(1) - the catalytic core - and F(0) - the membrane proton channel. F(1) has five subunits: alpha(3), beta(3), gamma(1), delta(1), epsilon(1). F(0) has three main subunits: a(1), b(2) and c(10-14). The alpha and beta chains form an alternating ring which encloses part of the gamma chain. F(1) is attached to F(0) by a central stalk formed by the gamma and epsilon chains, while a peripheral stalk is formed by the delta and b chains.

It localises to the cell membrane. In terms of biological role, f(1)F(0) ATP synthase produces ATP from ADP in the presence of a proton or sodium gradient. F-type ATPases consist of two structural domains, F(1) containing the extramembraneous catalytic core and F(0) containing the membrane proton channel, linked together by a central stalk and a peripheral stalk. During catalysis, ATP synthesis in the catalytic domain of F(1) is coupled via a rotary mechanism of the central stalk subunits to proton translocation. Its function is as follows. Key component of the F(0) channel; it plays a direct role in translocation across the membrane. A homomeric c-ring of between 10-14 subunits forms the central stalk rotor element with the F(1) delta and epsilon subunits. The chain is ATP synthase subunit c from Staphylococcus haemolyticus (strain JCSC1435).